A 506-amino-acid polypeptide reads, in one-letter code: Maturase K (506 aa).

This sequence belongs to the intron maturase 2 family. MatK subfamily.

Its subcellular location is the plastid. The protein resides in the chloroplast. In terms of biological role, usually encoded in the trnK tRNA gene intron. Probably assists in splicing its own and other chloroplast group II introns. In Mentzelia lindleyi (Blazing star), this protein is Maturase K.